We begin with the raw amino-acid sequence, 677 residues long: Regulator of G-protein signaling 9 (677 aa).

The DEP domain occupies 30 to 105 (PETGVRMQNQ…PDSSLYRFQT (76 aa)). The region spanning 219 to 280 (VTAVRKEIMY…ITDDTQFWDL (62 aa)) is the G protein gamma domain. Residues 295–416 (RWAFNFSELI…SPIYKEMLAK (122 aa)) enclose the RGS domain. 2 disordered regions span residues 530–571 (SSGL…RAPL) and 639–677 (DSGPCLMDSDDPGAGESGDQTTEKEVICPWESLAEGKAG).

As to quaternary structure, heterodimer with GNB5. Interacts with RGS7BP, leading to regulate the subcellular location of the heterodimer formed with GNB5. Component of the RGS9-1-Gbeta5 complex composed of RGS9 (RGS9-1), Gbeta5 (GNB5) and RGS9BP. Interacts with PDE6G and GNAT1. Expressed in the central nervous system. Isoform RGS9L is found in striatum, hypothalamus and nucleus accumbens while isoform RGS9S is expressed in retina and pineal gland.

It is found in the membrane. Functionally, inhibits signal transduction by increasing the GTPase activity of G protein alpha subunits thereby driving them into their inactive GDP-bound form. Binds to GNAT1. Involved in phototransduction; key element in the recovery phase of visual transduction. The protein is Regulator of G-protein signaling 9 (Rgs9) of Rattus norvegicus (Rat).